The chain runs to 349 residues: Sexual stage-specific protein G37 (349 aa).

An N-terminal signal peptide occupies residues 1-18 (MKLYLVTFLFFVIYKNKT). Topologically, residues 19 to 91 (FVDCVTKKQD…INQVSNNIMR (73 aa)) are extracellular. A helical transmembrane segment spans residues 92-112 (VYISLLSLFLFPYFSYIGIFG). At 113–117 (HSRNK) the chain is on the cytoplasmic side. A helical transmembrane segment spans residues 118–138 (ANLTLSSLLAYFALLVSFFLF). Residues 139–140 (NG) are Extracellular-facing. A helical transmembrane segment spans residues 141–161 (ILNIGFVTSLPLVVAVLIFIL). Topologically, residues 162-176 (GVSDCEINFLYKYTR) are cytoplasmic. A helical transmembrane segment spans residues 177–197 (YIFCFIISKLIYDVVTYISKD). At 198 to 218 (GANIFDYGFSGHIYMNLLRGK) the chain is on the extracellular side. The chain crosses the membrane as a helical span at residues 219–239 (YYIVLKLIHLIILSLISLIII). Residues 240–262 (KICPKIFSNNHLKSPISITFDKY) are Cytoplasmic-facing. The helical transmembrane segment at 263-283 (IISFLCSLPIATAISQVFYLL) threads the bilayer. Over 284-305 (SKTINPIDPSIFFMIPSSINFS) the chain is Extracellular. A helical membrane pass occupies residues 306-326 (STGTIFSLSIWILMSYLMTFL). At 327 to 349 (RNKVEADFNNILNKIPNNLPDFI) the chain is on the cytoplasmic side.

It localises to the cell membrane. Involved in the development of male gametocytes. This is Sexual stage-specific protein G37 from Plasmodium berghei (strain Anka).